Consider the following 142-residue polypeptide: Peptide methionine sulfoxide reductase MsrB (142 aa).

The MsrB domain occupies 13 to 135; the sequence is EKDWKVELSE…NSLSMTFKGE (123 aa). Residues cysteine 52, cysteine 55, cysteine 101, and cysteine 104 each coordinate Zn(2+). Cysteine 124 serves as the catalytic Nucleophile.

This sequence belongs to the MsrB Met sulfoxide reductase family. Zn(2+) serves as cofactor.

It carries out the reaction L-methionyl-[protein] + [thioredoxin]-disulfide + H2O = L-methionyl-(R)-S-oxide-[protein] + [thioredoxin]-dithiol. The sequence is that of Peptide methionine sulfoxide reductase MsrB from Alteromonas mediterranea (strain DSM 17117 / CIP 110805 / LMG 28347 / Deep ecotype).